Here is an 88-residue protein sequence, read N- to C-terminus: Apolipoprotein C-I (88 aa).

Positions 1–26 (MRLILSLPVLVVVLSMVLEGPAPAQA) are cleaved as a signal peptide.

This sequence belongs to the apolipoprotein C1 family. In terms of tissue distribution, expressed in the liver.

The protein resides in the secreted. Inhibitor of lipoprotein binding to the low density lipoprotein (LDL) receptor, LDL receptor-related protein, and very low density lipoprotein (VLDL) receptor. Associates with high density lipoproteins (HDL) and the triacylglycerol-rich lipoproteins in the plasma and makes up about 10% of the protein of the VLDL and 2% of that of HDL. Appears to interfere directly with fatty acid uptake and is also the major plasma inhibitor of cholesteryl ester transfer protein (CETP). Binds free fatty acids and reduces their intracellular esterification. Modulates the interaction of APOE with beta-migrating VLDL and inhibits binding of beta-VLDL to the LDL receptor-related protein. The protein is Apolipoprotein C-I (APOC1) of Canis lupus familiaris (Dog).